We begin with the raw amino-acid sequence, 267 residues long: Dynein axonemal assembly factor 19 homolog (267 aa).

Disordered regions lie at residues 86–111 (ISQS…RDWR) and 226–250 (HQGK…VDPC).

Belongs to the DNAAF19/PR46b family. Homodimer.

Its subcellular location is the cytoplasm. The protein resides in the cell projection. The protein localises to the cilium. It localises to the flagellum. In terms of biological role, dynein-attachment factor required for cilia motility. This Chlamydomonas reinhardtii (Chlamydomonas smithii) protein is Dynein axonemal assembly factor 19 homolog (PR46b).